A 677-amino-acid chain; its full sequence is Galactocerebrosidase (677 aa).

The N-terminal stretch at 1–33 (MGTVPAGSRRAPGCGEGMFILCLALLLAPGAPA) is a signal peptide. 3 residues coordinate substrate: T101, W143, and N189. E190 functions as the Proton donor/acceptor in the catalytic mechanism. E265 functions as the Nucleophile in the catalytic mechanism. Residues C278 and C385 are joined by a disulfide bond. N291, N370, and N381 each carry an N-linked (GlcNAc...) asparagine glycan. R387 is a substrate binding site. N-linked (GlcNAc...) asparagine glycosylation is found at N394, N399, N424, N441, N509, N549, and N630.

It belongs to the glycosyl hydrolase 59 family.

The protein resides in the lysosome. The catalysed reaction is a beta-D-galactosyl-(1&lt;-&gt;1')-N-acylsphing-4-enine + H2O = an N-acylsphing-4-enine + D-galactose. The enzyme catalyses beta-D-galactosyl-(1&lt;-&gt;1)-sphing-4-enine + H2O = sphing-4-enine + D-galactose. It carries out the reaction a D-galactosylceramide + H2O = an N-acyl-sphingoid base + D-galactose. Hydrolyzes the galactose ester bonds of glycolipids such as galactosylceramide and galactosylsphingosine. This chain is Galactocerebrosidase, found in Xenopus laevis (African clawed frog).